Consider the following 333-residue polypeptide: Atrochrysone carboxyl ACP thioesterase MYCFIDRAFT_190111 (333 aa).

The Zn(2+) site is built by His108, His110, Asp112, and His113. Asp112 (proton donor/acceptor) is an active-site residue.

This sequence belongs to the metallo-beta-lactamase superfamily. Zn(2+) is required as a cofactor.

The catalysed reaction is atrochrysone carboxyl-[ACP] + H2O = atrochrysone carboxylate + holo-[ACP] + H(+). The protein operates within secondary metabolite biosynthesis. Its function is as follows. Atrochrysone carboxyl ACP thioesterase; part of the gene cluster that mediates the biosynthesis of an emodin derivative that may be involved in black Sigatoka disease of banana. The pathway begins with the synthesis of atrochrysone thioester by the polyketide synthase PKS8-1. The atrochrysone carboxyl ACP thioesterase MYCFIDRAFT_190111 then breaks the thioester bond and releases the atrochrysone carboxylic acid from PKS8-1. The decarboxylase MYCFIDRAFT_34057 then catalyzes the concerted decarboxylation-elimination required to convert atochrysone carboxylic acid into emodin anthrone, which is further oxidized to emodin by the anthrone oxygenase MYCFIDRAFT_34418. The functions of the other tailoring enzymes as well as the final product of the cluster have still to be identified. This Pseudocercospora fijiensis (strain CIRAD86) (Black leaf streak disease fungus) protein is Atrochrysone carboxyl ACP thioesterase MYCFIDRAFT_190111.